The primary structure comprises 1214 residues: ATP-dependent helicase/nuclease subunit A (1214 aa).

Residues 27-483 (HKRTAQQIEA…ILLKENFRSQ (457 aa)) enclose the UvrD-like helicase ATP-binding domain. 48-55 (ASAGSGKT) lines the ATP pocket. Positions 512-800 (QLVAGSEAQK…NLMTIHKSKG (289 aa)) constitute a UvrD-like helicase C-terminal domain.

The protein belongs to the helicase family. AddA subfamily. As to quaternary structure, heterodimer of AddA and AddB/RexB. The cofactor is Mg(2+).

It carries out the reaction Couples ATP hydrolysis with the unwinding of duplex DNA by translocating in the 3'-5' direction.. The catalysed reaction is ATP + H2O = ADP + phosphate + H(+). In terms of biological role, the heterodimer acts as both an ATP-dependent DNA helicase and an ATP-dependent, dual-direction single-stranded exonuclease. Recognizes the chi site generating a DNA molecule suitable for the initiation of homologous recombination. The AddA nuclease domain is required for chi fragment generation; this subunit has the helicase and 3' -&gt; 5' nuclease activities. This Streptococcus equi subsp. zooepidemicus (strain MGCS10565) protein is ATP-dependent helicase/nuclease subunit A.